Consider the following 290-residue polypeptide: MAEDKTKRLGRWYFGGVAGAMAACCTHPLDLLKVQLQTQQQGKLTIGQLSLKIYKNDGILAFYNGVSASVLRQLTYSTTRFGIYETVKKQLPQDQPLPFYQKALLAGFAGACGGMVGTPGDLVNVRMQNDSKLPLEQRRNYKHALDGLVRITREEGFMKMFNGATMATSRAILMTIGQLSFYDQIKQTLISSGVAEDNLQTHFASSISAASVATVMTQPLDVMKTRMMNAAPGEFKGILDCFMFTAKLGPMGFFKGFIPAWARLAPHTVLTFIFFEQLRLKFGYAPPVKA.

Solcar repeat units follow at residues 6–90 (TKRL…VKKQ), 101–188 (QKAL…IKQT), and 197–281 (DNLQ…LRLK). 3 consecutive transmembrane segments (helical) span residues 12–32 (WYFG…LDLL), 65–84 (GVSA…FGIY), and 103–123 (ALLA…GDLV). The residue at position 159 (lysine 159) is an N6-acetyllysine. The next 3 membrane-spanning stretches (helical) occupy residues 163-182 (GATM…LSFY), 203-223 (FASS…LDVM), and 256-276 (GFIP…IFFE).

This sequence belongs to the mitochondrial carrier (TC 2.A.29) family.

The protein resides in the mitochondrion inner membrane. It catalyses the reaction (S)-malate(in) + phosphate(out) = (S)-malate(out) + phosphate(in). It carries out the reaction malonate(out) + (S)-malate(in) = malonate(in) + (S)-malate(out). The enzyme catalyses (S)-malate(in) + succinate(out) = (S)-malate(out) + succinate(in). The catalysed reaction is (S)-malate(in) + sulfate(out) = (S)-malate(out) + sulfate(in). It catalyses the reaction 2 thiosulfate(out) + (S)-malate(in) = 2 thiosulfate(in) + (S)-malate(out). It carries out the reaction malonate(out) + phosphate(in) = malonate(in) + phosphate(out). The enzyme catalyses succinate(out) + phosphate(in) = succinate(in) + phosphate(out). The catalysed reaction is sulfate(out) + phosphate(in) = sulfate(in) + phosphate(out). It catalyses the reaction 2 thiosulfate(out) + phosphate(in) = 2 thiosulfate(in) + phosphate(out). It carries out the reaction malonate(out) + succinate(in) = malonate(in) + succinate(out). Functionally, catalyzes the electroneutral exchange or flux of physiologically important metabolites such as dicarboxylates (malonate, malate, succinate), inorganic sulfur-containing anions, and phosphate, across mitochondrial inner membrane. Plays an important role in gluconeogenesis, fatty acid metabolism, urea synthesis, and sulfur metabolism, by supplying the substrates for the different metabolic processes. In Caenorhabditis elegans, this protein is Mitochondrial dicarboxylate carrier.